Consider the following 105-residue polypeptide: MSGKTITRAQLSEAVYQEVGLSRNESADLLEMVLNEMSEALVEGDTVKISSFGSFSVREKGERVGRNPKTGEEVPILPRRVLVFRPSQLLKARINDGAVGSQING.

Belongs to the bacterial histone-like protein family. In terms of assembly, heterodimer of an alpha and a beta chain.

In terms of biological role, this protein is one of the two subunits of integration host factor, a specific DNA-binding protein that functions in genetic recombination as well as in transcriptional and translational control. This chain is Integration host factor subunit alpha, found in Rhodospirillum rubrum (strain ATCC 11170 / ATH 1.1.1 / DSM 467 / LMG 4362 / NCIMB 8255 / S1).